The following is a 320-amino-acid chain: Beta-carotene ketolase (320 aa).

It carries out the reaction all-trans-beta-carotene + 2 AH2 + 2 O2 = echinenone + 2 A + 3 H2O. The enzyme catalyses echinenone + 2 AH2 + 2 O2 = canthaxanthin + 2 A + 3 H2O. Its pathway is carotenoid biosynthesis; astaxanthin biosynthesis. Its function is as follows. Converts beta-carotene to canthaxanthin via echinenone. The polypeptide is Beta-carotene ketolase (Haematococcus lacustris (Green alga)).